The primary structure comprises 283 residues: MRQYLDLCQRIVNEGCWIENKRTGKRCLTVINADLTYDVANNRFPIITTRKSYWKAAIAEFLGYIRGYDNAADFRKLGAKTWDANANENQVWLNNPHRKGTDDMGRVYGVQGRAWRKPNGETVDQLRKIVNNLSRGIDDRGEILTFLNPGEFDLGCLRPCMYNHTFSLLGDTLYLTSYQRSCDVPLGLNFNQIQVFTFLALMAQITGKKAGQAYHKIVNAHIYEDQLELMRDVQLKREPFPSPKLEINPDIKTLEDLETWVTMDDFNVVGYQCHEPIKYPFSV.

A dUMP-binding site is contributed by Arg22. Cys160 serves as the catalytic Nucleophile. DUMP-binding positions include Arg180–Asp183, Asn191, and His221–Tyr223. Asp183 serves as a coordination point for (6R)-5,10-methylene-5,6,7,8-tetrahydrofolate. Residue Ser282 coordinates (6R)-5,10-methylene-5,6,7,8-tetrahydrofolate.

This sequence belongs to the thymidylate synthase family. Bacterial-type ThyA subfamily. As to quaternary structure, homodimer.

Its subcellular location is the cytoplasm. The catalysed reaction is dUMP + (6R)-5,10-methylene-5,6,7,8-tetrahydrofolate = 7,8-dihydrofolate + dTMP. It functions in the pathway pyrimidine metabolism; dTTP biosynthesis. Functionally, catalyzes the reductive methylation of 2'-deoxyuridine-5'-monophosphate (dUMP) to 2'-deoxythymidine-5'-monophosphate (dTMP) while utilizing 5,10-methylenetetrahydrofolate (mTHF) as the methyl donor and reductant in the reaction, yielding dihydrofolate (DHF) as a by-product. This enzymatic reaction provides an intracellular de novo source of dTMP, an essential precursor for DNA biosynthesis. This is Thymidylate synthase from Mannheimia succiniciproducens (strain KCTC 0769BP / MBEL55E).